The primary structure comprises 490 residues: Xylulose kinase (490 aa).

Substrate is bound by residues H99, R170, D280, and N281. ATP-binding positions include W355, 441–442 (GA), and N445.

This sequence belongs to the FGGY kinase family. Monomer.

The catalysed reaction is D-xylulose + ATP = D-xylulose 5-phosphate + ADP + H(+). Phosphorylates D-xylulose to produce D-xylulose 5-phosphate, a molecule that may play an important role in the regulation of glucose metabolism and lipogenesis. The chain is Xylulose kinase (XYLB) from Bos taurus (Bovine).